The chain runs to 888 residues: Rab GTPase-activating protein eat-17 (888 aa).

Residues 41–60 are compositionally biased toward low complexity; that stretch reads RSNSNSTSSPRNSPSQLSPP. 2 disordered regions span residues 41–87 and 104–135; these read RSNS…CETG and LNKSNEEDSRSVASKKTGSSESRKGAREHSPE. The span at 114-123 shows a compositional bias: polar residues; the sequence is SVASKKTGSS. Residues 124 to 133 are compositionally biased toward basic and acidic residues; it reads ESRKGAREHS. One can recognise a Rab-GAP TBC domain in the interval 173-357; sequence GIPQHFRMIA…RIMDCFLVEG (185 aa). Residues 631 to 654 are disordered; the sequence is ASIEKESTSEAHSTQQQPSPPLTS. Residues 694 to 770 are a coiled coil; sequence EADTLAELKE…ESEFNEGRIN (77 aa). The interval 854-888 is disordered; the sequence is LAEEGSATETDELRPKELNDGNDTTDSGVQLSDSH. Over residues 874 to 888 the composition is skewed to polar residues; that stretch reads GNDTTDSGVQLSDSH.

As to quaternary structure, may interact with rab-6.2 (in GTP-bound form). Highly expressed in the terminal bulb muscles, pharyngeal muscle, in intestine and vulva.

In terms of biological role, rab GTPase activating protein for the small GTPase rab-6.2. Required for grinder formation, which is the feeding organ that breaks down food. This chain is Rab GTPase-activating protein eat-17, found in Caenorhabditis elegans.